The sequence spans 51 residues: Sperm protamine P1 (51 aa).

2 disulfides stabilise this stretch: Cys-7–Cys-15 and Cys-40–Cys-48.

The protein belongs to the protamine P1 family. In terms of assembly, cross-linked by interchain disulfide bonds around the DNA-helix. In terms of processing, phosphorylated by SRPK1. As to expression, testis.

The protein resides in the nucleus. It localises to the chromosome. In terms of biological role, protamines substitute for histones in the chromatin of sperm during the haploid phase of spermatogenesis. They compact sperm DNA into a highly condensed, stable and inactive complex. This chain is Sperm protamine P1 (PRM1), found in Bos taurus (Bovine).